A 444-amino-acid polypeptide reads, in one-letter code: NEDD8-activating enzyme E1 catalytic subunit (444 aa).

54 to 78 is an ATP binding site; the sequence is GLGCEILKDLALSGFRDLSVIDMDT. The active-site Glycyl thioester intermediate is Cys205.

This sequence belongs to the ubiquitin-activating E1 family. UBA3 subfamily. Heterodimer of uba3 and ula1. Interacts with NEDD8 and ubc12. Interacts with but1 and but2.

The catalysed reaction is ATP + [NEDD8 protein] + [E1 NEDD8-activating enzyme]-L-cysteine = AMP + diphosphate + [E1 NEDD8-activating enzyme]-S-[NEDD8 protein]-yl-L-cysteine.. Its pathway is protein modification; protein neddylation. In terms of biological role, catalytic subunit of the dimeric uba3-ula1 E1 enzyme. E1 activates NEDD8/ubl1 by first adenylating its C-terminal glycine residue with ATP, thereafter linking this residue to the side chain of the catalytic cysteine, yielding a NEDD8-uba3 thioester and free AMP. E1 finally transfers NEDD8 to the catalytic cysteine of ubc12. This Schizosaccharomyces pombe (strain 972 / ATCC 24843) (Fission yeast) protein is NEDD8-activating enzyme E1 catalytic subunit (uba3).